A 363-amino-acid chain; its full sequence is Aminomethyltransferase (363 aa).

It belongs to the GcvT family. As to quaternary structure, the glycine cleavage system is composed of four proteins: P, T, L and H.

It catalyses the reaction N(6)-[(R)-S(8)-aminomethyldihydrolipoyl]-L-lysyl-[protein] + (6S)-5,6,7,8-tetrahydrofolate = N(6)-[(R)-dihydrolipoyl]-L-lysyl-[protein] + (6R)-5,10-methylene-5,6,7,8-tetrahydrofolate + NH4(+). In terms of biological role, the glycine cleavage system catalyzes the degradation of glycine. The sequence is that of Aminomethyltransferase from Nitrosomonas europaea (strain ATCC 19718 / CIP 103999 / KCTC 2705 / NBRC 14298).